Here is a 575-residue protein sequence, read N- to C-terminus: Alpha-(1,6)-fucosyltransferase (575 aa).

Residues 1 to 9 (MRPWTGSWR) are Cytoplasmic-facing. The chain crosses the membrane as a helical; Signal-anchor for type II membrane protein span at residues 10–30 (WIMLILFAWGTLLFYIGGHLV). Residues 31-575 (RDNDHSDHSS…KYPTYPEADK (545 aa)) are Lumenal-facing. 3 disulfides stabilise this stretch: C204–C266, C212–C230, and C218–C222. Residues 206 to 493 (KAKKLVCNIN…PDASANFRSL (288 aa)) form the GT23 domain. A Phosphoserine modification is found at S278. The short motif at 299–305 (PRPPYLP) is the SH3-binding element. The interval 365–366 (RR) is important for donor substrate binding. An intrachain disulfide couples C465 to C472. The 62-residue stretch at 502–563 (PNAHNQIAIY…PSYKVREKIE (62 aa)) folds into the SH3 domain.

This sequence belongs to the glycosyltransferase 23 family. Tyrosine phosphorylated by PKDCC/VLK. Highest expression in brain.

Its subcellular location is the golgi apparatus. The protein localises to the golgi stack membrane. It carries out the reaction N(4)-{beta-D-GlcNAc-(1-&gt;2)-alpha-D-Man-(1-&gt;3)-[beta-D-GlcNAc-(1-&gt;2)-alpha-D-Man-(1-&gt;6)]-beta-D-Man-(1-&gt;4)-beta-D-GlcNAc-(1-&gt;4)-beta-D-GlcNAc}-L-asparaginyl-[protein] + GDP-beta-L-fucose = an N(4)-{beta-D-GlcNAc-(1-&gt;2)-alpha-D-Man-(1-&gt;3)-[beta-D-GlcNAc-(1-&gt;2)-alpha-D-Man-(1-&gt;6)]-beta-D-Man-(1-&gt;4)-beta-D-GlcNAc-(1-&gt;4)-[alpha-L-Fuc-(1-&gt;6)]-beta-D-GlcNAc}-L-asparaginyl-[protein] + GDP + H(+). Its pathway is protein modification; protein glycosylation. Catalyzes the addition of fucose in alpha 1-6 linkage to the first GlcNAc residue, next to the peptide chains in N-glycans. The chain is Alpha-(1,6)-fucosyltransferase (FUT8) from Sus scrofa (Pig).